A 155-amino-acid chain; its full sequence is Small ribosomal subunit protein uS7c (155 aa).

This sequence belongs to the universal ribosomal protein uS7 family. Part of the 30S ribosomal subunit.

The protein localises to the plastid. Its subcellular location is the chloroplast. One of the primary rRNA binding proteins, it binds directly to 16S rRNA where it nucleates assembly of the head domain of the 30S subunit. The sequence is that of Small ribosomal subunit protein uS7c (rps7) from Saruma henryi (Upright wild ginger).